The chain runs to 130 residues: Small ribosomal subunit protein uS11 (130 aa).

It belongs to the universal ribosomal protein uS11 family. In terms of assembly, part of the 30S ribosomal subunit. Interacts with proteins S7 and S18. Binds to IF-3.

Functionally, located on the platform of the 30S subunit, it bridges several disparate RNA helices of the 16S rRNA. Forms part of the Shine-Dalgarno cleft in the 70S ribosome. This is Small ribosomal subunit protein uS11 from Xylella fastidiosa (strain M12).